The sequence spans 310 residues: Acetyl-coenzyme A carboxylase carboxyl transferase subunit alpha (310 aa).

Positions 31–285 (SFERELRIIN…KQKILRRLKQ (255 aa)) constitute a CoA carboxyltransferase C-terminal domain.

Belongs to the AccA family. In terms of assembly, acetyl-CoA carboxylase is a heterohexamer composed of biotin carboxyl carrier protein (accB), biotin carboxylase (accC) and two subunits each of ACCase subunit alpha (accA) and ACCase subunit beta (accD).

Its subcellular location is the plastid. The protein localises to the chloroplast. The catalysed reaction is N(6)-carboxybiotinyl-L-lysyl-[protein] + acetyl-CoA = N(6)-biotinyl-L-lysyl-[protein] + malonyl-CoA. It participates in lipid metabolism; malonyl-CoA biosynthesis; malonyl-CoA from acetyl-CoA: step 1/1. In terms of biological role, component of the acetyl coenzyme A carboxylase (ACC) complex. First, biotin carboxylase catalyzes the carboxylation of biotin on its carrier protein (BCCP) and then the CO(2) group is transferred by the carboxyltransferase to acetyl-CoA to form malonyl-CoA. In Cyanidioschyzon merolae (strain NIES-3377 / 10D) (Unicellular red alga), this protein is Acetyl-coenzyme A carboxylase carboxyl transferase subunit alpha.